We begin with the raw amino-acid sequence, 275 residues long: Trans-aconitate 2-methyltransferase (275 aa).

It belongs to the methyltransferase superfamily. Tam family.

It is found in the cytoplasm. The catalysed reaction is trans-aconitate + S-adenosyl-L-methionine = (E)-3-(methoxycarbonyl)pent-2-enedioate + S-adenosyl-L-homocysteine. Functionally, catalyzes the S-adenosylmethionine monomethyl esterification of trans-aconitate. The protein is Trans-aconitate 2-methyltransferase of Pseudomonas aeruginosa (strain UCBPP-PA14).